Consider the following 78-residue polypeptide: Small ribosomal subunit protein bS20 (78 aa).

The segment at 55 to 78 (KSKGLIHKNKASRDKARLASKLAK) is disordered.

The protein belongs to the bacterial ribosomal protein bS20 family.

Binds directly to 16S ribosomal RNA. The protein is Small ribosomal subunit protein bS20 of Streptococcus mutans serotype c (strain ATCC 700610 / UA159).